The primary structure comprises 245 residues: Phycocyanobilin:ferredoxin oxidoreductase (245 aa).

It belongs to the HY2 family.

The catalysed reaction is (2R,3Z)-phycocyanobilin + 4 oxidized [2Fe-2S]-[ferredoxin] = biliverdin IXalpha + 4 reduced [2Fe-2S]-[ferredoxin] + 4 H(+). Catalyzes the four-electron reduction of biliverdin IX-alpha (2-electron reduction at both the A and D rings); the reaction proceeds via an isolatable 2-electron intermediate, 181,182-dihydrobiliverdin. Upon overexpression in E.coli with PCB:ferredoxin oxidoreductase, CpeS and either CpcB or PecB permits synthesis of phycocyanin-coupled CpcB or PecB. The sequence is that of Phycocyanobilin:ferredoxin oxidoreductase (pcyA) from Nostoc sp. (strain PCC 7120 / SAG 25.82 / UTEX 2576).